The following is a 32-amino-acid chain: ATP synthase 28 kDa subunit, mitochondrial (32 aa).

Its subcellular location is the mitochondrion. It localises to the mitochondrion inner membrane. Functionally, mitochondrial membrane ATP synthase (F(1)F(0) ATP synthase or Complex V) produces ATP from ADP in the presence of a proton gradient across the membrane which is generated by electron transport complexes of the respiratory chain. F-type ATPases consist of two structural domains, F(1) - containing the extramembraneous catalytic core and F(0) - containing the membrane proton channel, linked together by a central stalk and a peripheral stalk. During catalysis, ATP synthesis in the catalytic domain of F(1) is coupled via a rotary mechanism of the central stalk subunits to proton translocation. Part of the complex F(0) domain. In Spinacia oleracea (Spinach), this protein is ATP synthase 28 kDa subunit, mitochondrial.